The primary structure comprises 312 residues: Acetaldehyde dehydrogenase (312 aa).

Position 11–14 (11–14) interacts with NAD(+); that stretch reads SGNI. C129 acts as the Acyl-thioester intermediate in catalysis. Residues 160-168 and N287 contribute to the NAD(+) site; that span reads SAGPGTRAN.

It belongs to the acetaldehyde dehydrogenase family.

It catalyses the reaction acetaldehyde + NAD(+) + CoA = acetyl-CoA + NADH + H(+). The polypeptide is Acetaldehyde dehydrogenase (xylQ) (Sphingobium yanoikuyae (Sphingomonas yanoikuyae)).